The primary structure comprises 479 residues: Proline--tRNA ligase 2 (479 aa).

It belongs to the class-II aminoacyl-tRNA synthetase family. ProS type 3 subfamily. In terms of assembly, homodimer.

Its subcellular location is the cytoplasm. The catalysed reaction is tRNA(Pro) + L-proline + ATP = L-prolyl-tRNA(Pro) + AMP + diphosphate. Functionally, catalyzes the attachment of proline to tRNA(Pro) in a two-step reaction: proline is first activated by ATP to form Pro-AMP and then transferred to the acceptor end of tRNA(Pro). The chain is Proline--tRNA ligase 2 from Rhodococcus jostii (strain RHA1).